A 113-amino-acid chain; its full sequence is Flagellar transcriptional regulator FlhD (113 aa).

This sequence belongs to the FlhD family. Homodimer; disulfide-linked. Forms a heterohexamer composed of two FlhC and four FlhD subunits. Each FlhC binds a FlhD dimer, forming a heterotrimer, and a hexamer assembles by dimerization of two heterotrimers.

The protein resides in the cytoplasm. In terms of biological role, functions in complex with FlhC as a master transcriptional regulator that regulates transcription of several flagellar and non-flagellar operons by binding to their promoter region. Activates expression of class 2 flagellar genes, including fliA, which is a flagellum-specific sigma factor that turns on the class 3 genes. Also regulates genes whose products function in a variety of physiological pathways. The chain is Flagellar transcriptional regulator FlhD from Salmonella typhi.